The primary structure comprises 275 residues: 2,3,4,5-tetrahydropyridine-2,6-dicarboxylate N-succinyltransferase (275 aa).

Arg105 and Asp142 together coordinate substrate.

The protein belongs to the transferase hexapeptide repeat family. As to quaternary structure, homotrimer.

Its subcellular location is the cytoplasm. The enzyme catalyses (S)-2,3,4,5-tetrahydrodipicolinate + succinyl-CoA + H2O = (S)-2-succinylamino-6-oxoheptanedioate + CoA. The protein operates within amino-acid biosynthesis; L-lysine biosynthesis via DAP pathway; LL-2,6-diaminopimelate from (S)-tetrahydrodipicolinate (succinylase route): step 1/3. The chain is 2,3,4,5-tetrahydropyridine-2,6-dicarboxylate N-succinyltransferase from Histophilus somni (strain 129Pt) (Haemophilus somnus).